Reading from the N-terminus, the 404-residue chain is MRGSVERGWGWGHCASSPLLLWTLLLFAAPFGLLGEKTRQLSLEVIPNWLGPLQNLLHIRAVGTNSTLHYVWSSLGPLAVVMVATNTPHSTLSVNWSRLLSPEPDGGLMVLPKDSIQFSSALVFTRLLEFDSTNVSNTAAKPPGRPYPPYSLADFSWNNITDSLPATLSATFQGHPMNDPTRTFANGSLAFRVQAFSRSSRPAQPPRLLHTADTCQLEVALVGASPRGNHSLFGLEVATLGQGPDCPSMQEQHSIDDEYAPAVFQLDQLLWGSLPAGFAQWRPVAYSQKPGGRESALPCQASPLHPALAYSLPQSPIVRAFFGSQNNFCAFNLTFGASTGPGYWDQHYLSWNAPGCGLPSSGRLVPTSPGHHGSALGAPGLMLLGGGLVLLLHHRKYSEYQSIN.

The N-terminal stretch at 1-35 (MRGSVERGWGWGHCASSPLLLWTLLLFAAPFGLLG) is a signal peptide. Over 36 to 371 (EKTRQLSLEV…GRLVPTSPGH (336 aa)) the chain is Lumenal. Residues N65, N134, N159, N186, and N229 are each glycosylated (N-linked (GlcNAc...) asparagine). Residues 372 to 392 (HGSALGAPGLMLLGGGLVLLL) traverse the membrane as a helical segment. The Cytoplasmic segment spans residues 393–404 (HHRKYSEYQSIN). The Lysosomal targeting motif signature appears at 400–404 (YQSIN).

This sequence belongs to the GLMP family. As to quaternary structure, interacts (via lumenal domain) with lysosomal protein MFSD1; the interaction starts while both proteins are still in the endoplasmic reticulum and is required for stabilization of MFSD1 in lysosomes but has no direct effect on its targeting to lysosomes or transporter activity. In terms of processing, highly N-glycosylated. N-glycosylation is essential for GLMP stability and for MFSD1 lysosomal localization.

It is found in the lysosome membrane. Functionally, required to protect lysosomal transporter MFSD1 from lysosomal proteolysis and for MFSD1 lysosomal localization. The polypeptide is Glycosylated lysosomal membrane protein (Pongo abelii (Sumatran orangutan)).